A 449-amino-acid polypeptide reads, in one-letter code: Secretin receptor (449 aa).

A signal peptide spans 1–25 (MLSTMRPRLSLLLLRLLLLTKAAHT). The Extracellular portion of the chain corresponds to 26-141 (VGVPPRLCDV…NERRHAYLLK (116 aa)). 3 disulfide bridges follow: Cys46–Cys75, Cys66–Cys107, and Cys89–Cys123. N-linked (GlcNAc...) asparagine glycosylation is found at Asn72, Asn100, Asn106, and Asn128. A helical transmembrane segment spans residues 142-167 (LKVMYTVGYSSSLAMLLVALSILCSF). The Cytoplasmic segment spans residues 168 to 174 (RRLHCTR). The helical transmembrane segment at 175–195 (NYIHMHLFVSFILRALSNFIK) threads the bilayer. The Extracellular portion of the chain corresponds to 196–216 (DAVLFSSDDVTYCDAHKVGCK). Cys215 and Cys285 are joined by a disulfide. The chain crosses the membrane as a helical span at residues 217–239 (LVMIFFQYCIMANYAWLLVEGLY). The Cytoplasmic portion of the chain corresponds to 240 to 254 (LHTLLAISFFSERKY). The chain crosses the membrane as a helical span at residues 255–276 (LQAFVLLGWGSPAIFVALWAIT). At 277-291 (RHFLENTGCWDINAN) the chain is on the extracellular side. N-linked (GlcNAc...) asparagine glycosylation occurs at Asn291. The helical transmembrane segment at 292 to 315 (ASVWWVIRGPVILSILINFIFFIN) threads the bilayer. Over 316 to 340 (ILRILMRKLRTQETRGSETNHYKRL) the chain is Cytoplasmic. A helical membrane pass occupies residues 341-356 (AKSTLLLIPLFGIHYI). The Extracellular portion of the chain corresponds to 357–367 (VFAFSPEDAME). Residues 368-391 (VQLFFELALGSFQGLVVAVLYCFL) traverse the membrane as a helical segment. At 392–449 (NGEVQLEVQKKWRQWHLQEFPLRPVAFNNSFSNATNGPTHSTKASTEQSRSIPRASII) the chain is on the cytoplasmic side. The span at 425-442 (ATNGPTHSTKASTEQSRS) shows a compositional bias: polar residues. A disordered region spans residues 425–449 (ATNGPTHSTKASTEQSRSIPRASII).

Belongs to the G-protein coupled receptor 2 family. In terms of processing, phosphorylated on Ser and Thr residues at the cytoplasmic C-terminus by G protein-coupled receptor kinases (GRKs). N-glycosylated. In terms of tissue distribution, in the brain, expressed in the central amygdala, hippocampus, area postrema, nucleus of the tractus solitary and cerebellum.

The protein localises to the cell membrane. It is found in the basolateral cell membrane. G protein-coupled receptor activated by secretin (SCT), which is involved in different processes such as regulation of the pH of the duodenal content, food intake and water homeostasis. Ligand binding causes a conformation change that triggers signaling via guanine nucleotide-binding proteins (G proteins) and activates cAMP-dependent pathway. Upon binding to secretin, regulates the pH of the duodenum by (1) inhibiting the secretion of gastric acid from the parietal cells of the stomach and (2) stimulating the production of bicarbonate (NaHCO(3)) from the ductal cells of the pancreas. In addition to regulating the pH of the duodenal content, plays a central role in diet induced thermogenesis: acts as a non-sympathetic brown fat (BAT) activator mediating prandial thermogenesis, which consequentially induces satiation. Mechanistically, secretin released by the gut after a meal binds to secretin receptor (SCTR) in brown adipocytes, activating brown fat thermogenesis by stimulating lipolysis, which is sensed in the brain and promotes satiation. Also able to stimulate lipolysis in white adipocytes. Also plays an important role in cellular osmoregulation by regulating renal water reabsorption. Also plays a role in the central nervous system: required for synaptic plasticity. The protein is Secretin receptor of Rattus norvegicus (Rat).